The sequence spans 288 residues: MKGIILAGGSGTRLYPITRGVSKQLLPVYDKPMIYYPLSVLMLAGIRDILVITAPEDNAAFQRLLGDGSDFGIRLQYAVQPSPDGLAQAFIIGEEFIGNGNVCLILGDNIFYGQSFTQTLKQAAAKTHGATVFGYRVKDPERFGVVEFDENFNALSIEEKPQQPKSDWAVTGLYFHDNRAVEFAKQLKPSARGELEISDLNRMYLEDGSLSVQILGRGFAWLDTGTQESLHEAASFVQTVQNIQNLHIACLEEIAWRNGWLTKKDVETRAKHLEKTAYGQYLLHLIGK.

Residues D108 and D223 each contribute to the Mg(2+) site.

This sequence belongs to the glucose-1-phosphate thymidylyltransferase family. In terms of assembly, homotetramer. It depends on Mg(2+) as a cofactor.

The enzyme catalyses dTTP + alpha-D-glucose 1-phosphate + H(+) = dTDP-alpha-D-glucose + diphosphate. Its function is as follows. Catalyzes the formation of dTDP-glucose, from dTTP and glucose 1-phosphate, as well as its pyrophosphorolysis. The chain is Glucose-1-phosphate thymidylyltransferase (rmlA) from Neisseria gonorrhoeae.